The following is a 125-amino-acid chain: Large ribosomal subunit protein eL32 (125 aa).

It belongs to the eukaryotic ribosomal protein eL32 family.

The sequence is that of Large ribosomal subunit protein eL32 (rpl32e) from Sulfolobus acidocaldarius (strain ATCC 33909 / DSM 639 / JCM 8929 / NBRC 15157 / NCIMB 11770).